We begin with the raw amino-acid sequence, 420 residues long: Exodeoxyribonuclease 7 large subunit (420 aa).

Belongs to the XseA family. As to quaternary structure, heterooligomer composed of large and small subunits.

Its subcellular location is the cytoplasm. It carries out the reaction Exonucleolytic cleavage in either 5'- to 3'- or 3'- to 5'-direction to yield nucleoside 5'-phosphates.. Bidirectionally degrades single-stranded DNA into large acid-insoluble oligonucleotides, which are then degraded further into small acid-soluble oligonucleotides. The protein is Exodeoxyribonuclease 7 large subunit of Helicobacter pylori (strain Shi470).